Here is a 651-residue protein sequence, read N- to C-terminus: L-aspartate oxidase, chloroplastic (651 aa).

Residues 1–74 (MAAHVSTGNI…PISETSKPIR (74 aa)) constitute a chloroplast transit peptide. FAD-binding positions include 92–95 (SGVA), K114, 121–128 (NTNYAQGG), and D292. The active-site Proton donor/acceptor is the R368. FAD is bound by residues E453 and 469–470 (SL).

This sequence belongs to the FAD-dependent oxidoreductase 2 family. NadB subfamily. In terms of assembly, interacts in vitro with QS. FAD is required as a cofactor.

The protein resides in the plastid. It is found in the chloroplast. The catalysed reaction is L-aspartate + O2 = iminosuccinate + H2O2. Its pathway is cofactor biosynthesis; NAD(+) biosynthesis; iminoaspartate from L-aspartate (oxidase route): step 1/1. Catalyzes the oxidation of L-aspartate to iminoaspartate. Can complement nadB-deficient E.coli mutant. Plays a role in stomatal immunity. The protein is L-aspartate oxidase, chloroplastic of Arabidopsis thaliana (Mouse-ear cress).